The sequence spans 158 residues: Transcriptional repressor NrdR (158 aa).

The segment at 3-34 is a zinc-finger region; the sequence is CPYCGYPDSKVIDSRPTDDNTSIRRRRECLKC. In terms of domain architecture, ATP-cone spans 49-139; the sequence is ILVIKKDNRR…VYRQFKDINT (91 aa).

Belongs to the NrdR family. Requires Zn(2+) as cofactor.

Functionally, negatively regulates transcription of bacterial ribonucleotide reductase nrd genes and operons by binding to NrdR-boxes. This chain is Transcriptional repressor NrdR, found in Thermoanaerobacter sp. (strain X514).